A 93-amino-acid chain; its full sequence is MSRSTKKGPFVHARLLKKIEAMNASGNKEVIKTWSRSSTVFPQMVENTIAVHDGRKHVPVYITEDMVGHKLGEFVPTRTFKGHKDDEKSNKRK.

The protein belongs to the universal ribosomal protein uS19 family.

Protein S19 forms a complex with S13 that binds strongly to the 16S ribosomal RNA. The chain is Small ribosomal subunit protein uS19 from Clostridioides difficile (strain 630) (Peptoclostridium difficile).